The primary structure comprises 245 residues: Demethylmenaquinone methyltransferase (245 aa).

S-adenosyl-L-methionine contacts are provided by residues threonine 69, aspartate 90, and aspartate 118–cysteine 119.

This sequence belongs to the class I-like SAM-binding methyltransferase superfamily. MenG/UbiE family.

The enzyme catalyses a 2-demethylmenaquinol + S-adenosyl-L-methionine = a menaquinol + S-adenosyl-L-homocysteine + H(+). The protein operates within quinol/quinone metabolism; menaquinone biosynthesis; menaquinol from 1,4-dihydroxy-2-naphthoate: step 2/2. In terms of biological role, methyltransferase required for the conversion of demethylmenaquinol (DMKH2) to menaquinol (MKH2). The chain is Demethylmenaquinone methyltransferase from Porphyromonas gingivalis (strain ATCC 33277 / DSM 20709 / CIP 103683 / JCM 12257 / NCTC 11834 / 2561).